The primary structure comprises 133 residues: Small ribosomal subunit protein uS8 (133 aa).

The protein belongs to the universal ribosomal protein uS8 family. Part of the 30S ribosomal subunit. Contacts proteins S5 and S12.

One of the primary rRNA binding proteins, it binds directly to 16S rRNA central domain where it helps coordinate assembly of the platform of the 30S subunit. This is Small ribosomal subunit protein uS8 from Prochlorococcus marinus (strain MIT 9215).